A 438-amino-acid polypeptide reads, in one-letter code: UPF0229 protein R01398 (438 aa).

Residues 55–107 (PARGVNEPAFQPDSNSGERRHVLPGNREFAAGDRIPKRGSGGGAGNAGAGTGQ) form a disordered region. The segment covering 93–105 (GSGGGAGNAGAGT) has biased composition (gly residues).

This sequence belongs to the UPF0229 family.

In Rhizobium meliloti (strain 1021) (Ensifer meliloti), this protein is UPF0229 protein R01398.